Reading from the N-terminus, the 102-residue chain is MICOS complex subunit MIC12 (102 aa).

Residues 4–26 form a helical membrane-spanning segment; sequence VLKLTSVTLAASSLAAAGYFYAF.

It belongs to the MICOS complex subunit Mic12 family. In terms of assembly, component of the mitochondrial contact site and cristae organizing system (MICOS) complex.

The protein localises to the mitochondrion inner membrane. Its function is as follows. Component of the MICOS complex, a large protein complex of the mitochondrial inner membrane that plays crucial roles in the maintenance of crista junctions, inner membrane architecture, and formation of contact sites to the outer membrane. The protein is MICOS complex subunit MIC12 (AIM5) of Lachancea thermotolerans (strain ATCC 56472 / CBS 6340 / NRRL Y-8284) (Yeast).